The chain runs to 381 residues: MRAVPLPLSRTASLSLGFLLLLSLCLDPGQAKELKFVTLVFRHGDRGPIETFPTDPITESSWPQGFGQLTQWGMEQHYELGSYIRKRYGRFLNDTYKHDQIYIRSTDVDRTLMSAMTNLAALFPPEGISIWNPRLLWQPIPVHTVSLSEDRLLYLPFRDCPRFEELKSETLESEEFLKRLHPYKSFLDTLSSLSGFDDQDLFGIWSKVYDPLFCESVHNFTLPSWATEDAMIKLKELSELSLLSLYGIHKQKEKSRLQGGVLVNEILKNMKLATQPQKYKKLVMYSAHDTTVSGLQMALDVYNGVLPPYASCHMMELYHDKGGHFVEMYYRNETQNEPYPLTLPGCTHSCPLEKFAELLDPVISQDWATECMATSSHQGRN.

Residues 1–31 form the signal peptide; sequence MRAVPLPLSRTASLSLGFLLLLSLCLDPGQA. Position 42 (Arg42) interacts with substrate. The Nucleophile role is filled by His43. Residue Arg46 participates in substrate binding. The N-linked (GlcNAc...) asparagine glycan is linked to Asn93. Residue Arg110 coordinates substrate. 3 cysteine pairs are disulfide-bonded: Cys160–Cys371, Cys214–Cys312, and Cys346–Cys350. The N-linked (GlcNAc...) asparagine glycan is linked to Asn219. His288 is a substrate binding site. The Proton donor role is filled by Asp289. Asn332 carries N-linked (GlcNAc...) asparagine glycosylation.

This sequence belongs to the histidine acid phosphatase family. Homodimer; dimer formation is required for phosphatase activity. Expressed in salivary gland, thymus and thyroid gland. As to expression, widely expressed in prostate lobes, brain, kidney, liver, lung, muscle, placenta, salivary gland, spleen, thyroid and thymus. Locates to Schwann cells and fibroblasts. Expressed in peptidergic and non-peptidergic nociceptive (pain-sensing) neurons. Preferentially expressed in non-peptidergic doral root ganglia neurons.

The protein resides in the secreted. Its subcellular location is the cell membrane. The protein localises to the lysosome membrane. It catalyses the reaction a phosphate monoester + H2O = an alcohol + phosphate. It carries out the reaction a ribonucleoside 5'-phosphate + H2O = a ribonucleoside + phosphate. The enzyme catalyses 1-(9Z-octadecenoyl)-sn-glycero-3-phosphate + H2O = 1-(9Z-octadecenoyl)-sn-glycerol + phosphate. The catalysed reaction is O-phospho-L-tyrosyl-[protein] + H2O = L-tyrosyl-[protein] + phosphate. Its function is as follows. A non-specific tyrosine phosphatase that dephosphorylates a diverse number of substrates under acidic conditions (pH 4-6) including alkyl, aryl, and acyl orthophosphate monoesters and phosphorylated proteins. Has lipid phosphatase activity and inactivates lysophosphatidic acid in seminal plasma. In terms of biological role, in addition to its tyrosine phosphatase activity, also has ecto-5'-nucleotidase activity in dorsal root ganglion (DRG) neurons. Generates adenosine from AMP. This extracellular adenosine leads to a decrease in chronic pain by activating A1R in nociceptive neurons. This is Prostatic acid phosphatase (Acp3) from Mus musculus (Mouse).